Here is a 379-residue protein sequence, read N- to C-terminus: Putative 8-amino-7-oxononanoate synthase (379 aa).

Arg18 is a substrate binding site. 106–107 (GY) is a pyridoxal 5'-phosphate binding site. His130 serves as a coordination point for substrate. Residues Ser178, 204 to 207 (DEAH), and 235 to 238 (TFGK) contribute to the pyridoxal 5'-phosphate site. Lys238 carries the N6-(pyridoxal phosphate)lysine modification. Substrate is bound at residue Thr351.

Belongs to the class-II pyridoxal-phosphate-dependent aminotransferase family. BioF subfamily. Homodimer. It depends on pyridoxal 5'-phosphate as a cofactor.

The enzyme catalyses 6-carboxyhexanoyl-[ACP] + L-alanine + H(+) = (8S)-8-amino-7-oxononanoate + holo-[ACP] + CO2. Its pathway is cofactor biosynthesis; biotin biosynthesis. In terms of biological role, catalyzes the decarboxylative condensation of pimeloyl-[acyl-carrier protein] and L-alanine to produce 8-amino-7-oxononanoate (AON), [acyl-carrier protein], and carbon dioxide. The protein is Putative 8-amino-7-oxononanoate synthase (bioF) of Haemophilus influenzae (strain 86-028NP).